Reading from the N-terminus, the 487-residue chain is Aspartyl/glutamyl-tRNA(Asn/Gln) amidotransferase subunit B (487 aa).

The protein belongs to the GatB/GatE family. GatB subfamily. As to quaternary structure, heterotrimer of A, B and C subunits.

It carries out the reaction L-glutamyl-tRNA(Gln) + L-glutamine + ATP + H2O = L-glutaminyl-tRNA(Gln) + L-glutamate + ADP + phosphate + H(+). The enzyme catalyses L-aspartyl-tRNA(Asn) + L-glutamine + ATP + H2O = L-asparaginyl-tRNA(Asn) + L-glutamate + ADP + phosphate + 2 H(+). Its function is as follows. Allows the formation of correctly charged Asn-tRNA(Asn) or Gln-tRNA(Gln) through the transamidation of misacylated Asp-tRNA(Asn) or Glu-tRNA(Gln) in organisms which lack either or both of asparaginyl-tRNA or glutaminyl-tRNA synthetases. The reaction takes place in the presence of glutamine and ATP through an activated phospho-Asp-tRNA(Asn) or phospho-Glu-tRNA(Gln). The sequence is that of Aspartyl/glutamyl-tRNA(Asn/Gln) amidotransferase subunit B from Leptospira biflexa serovar Patoc (strain Patoc 1 / Ames).